The chain runs to 250 residues: Ribosomal RNA small subunit methyltransferase J (250 aa).

S-adenosyl-L-methionine-binding positions include R101 to D102, E117 to R118, S153 to S154, and D171.

This sequence belongs to the methyltransferase superfamily. RsmJ family.

The protein resides in the cytoplasm. The catalysed reaction is guanosine(1516) in 16S rRNA + S-adenosyl-L-methionine = N(2)-methylguanosine(1516) in 16S rRNA + S-adenosyl-L-homocysteine + H(+). Its function is as follows. Specifically methylates the guanosine in position 1516 of 16S rRNA. This chain is Ribosomal RNA small subunit methyltransferase J, found in Escherichia coli (strain SMS-3-5 / SECEC).